Consider the following 78-residue polypeptide: Magnetosome protein MamL (78 aa).

Positions 1–22 (MVRVIGSLVFGGLILLLASSNA) are cleaved as a signal peptide. Topologically, residues 23–38 (HMVETRFGPLIMLAPH) are lumenal. The chain crosses the membrane as a helical span at residues 39-59 (FVVLGITFFLGFAIGIVLVFA). Residues 60–78 (NVMKRRKHKLPGKNIVIKR) are Cytoplasmic-facing.

Belongs to the magnetosome MamL family.

Its subcellular location is the magnetosome membrane. In terms of biological role, involved in magnetite crystal maturation, but not in magnetosome vesicle tubulation or formation. One of 7 genes (mamLQBIEMO) able to induce magnetosome membrane biogenesis; coexpression of mamLQRBIEMO in a deletion of the 17 gene mamAB operon restores magnetosome vesicle formation but not magnetite biosynthesis. The chain is Magnetosome protein MamL from Magnetospirillum gryphiswaldense (strain DSM 6361 / JCM 21280 / NBRC 15271 / MSR-1).